We begin with the raw amino-acid sequence, 198 residues long: MORN repeat-containing protein 4 homolog (198 aa).

Ala2 is modified (N-acetylalanine). Positions 23-45 are enriched in low complexity; it reads QHQQHPHQQGQHGHHQQGQGQSQ. A disordered region spans residues 23-46; sequence QHQQHPHQQGQHGHHQQGQGQSQY. MORN repeat units lie at residues 64–87, 88–109, 111–132, and 134–153; these read YIGE…DGTR, YDGQ…ADGA, YEGE…ADGM, and YEGE…TFQD.

Interacts with ninaC. Phosphorylated under dark conditions and is dephosphorylated by light exposure. As to expression, retina. Expressed primarily in the phototransducing compartment of photoreceptor cells, the rhabdomeres and its expression is dependent on ninaC protein (at protein level).

It is found in the membrane. Its subcellular location is the cell projection. The protein resides in the rhabdomere membrane. In terms of biological role, plays a role in promoting axonal degeneration following neuronal injury by toxic insult or trauma. Organizes rhabdomeric components to suppress random activation of the phototransduction cascade and thus increases the signaling fidelity of dark-adapted photoreceptors. The rtp/ninaC complex is required for stability of inad and inac and the normal termination of phototransduction in the retina. In Drosophila melanogaster (Fruit fly), this protein is MORN repeat-containing protein 4 homolog.